A 155-amino-acid polypeptide reads, in one-letter code: Ribosome maturation factor RimP (155 aa).

The protein belongs to the RimP family.

The protein localises to the cytoplasm. In terms of biological role, required for maturation of 30S ribosomal subunits. The chain is Ribosome maturation factor RimP from Listeria innocua serovar 6a (strain ATCC BAA-680 / CLIP 11262).